A 245-amino-acid chain; its full sequence is uncharacterized protein (245 aa).

An N-terminal signal peptide occupies residues 1-27 (MKLKKRVSMFLVALTMCGGLFVTPAKA).

This is an uncharacterized protein from Bacillus subtilis (strain 168).